The chain runs to 483 residues: GTPase Der (483 aa).

2 consecutive EngA-type G domains span residues 3–167 and 212–387; these read FTVA…GEER and LRIA…EIWN. GTP-binding positions include 9-16, 56-60, 119-122, 218-225, 265-269, and 330-333; these read GRPNVGKS, DTAGL, NKAE, GRPNAGKS, and NKWD. One can recognise a KH-like domain in the interval 388–472; the sequence is RRVSTGRLNR…PIRLSLRTSD (85 aa).

This sequence belongs to the TRAFAC class TrmE-Era-EngA-EngB-Septin-like GTPase superfamily. EngA (Der) GTPase family. Associates with the 50S ribosomal subunit.

Its function is as follows. GTPase that plays an essential role in the late steps of ribosome biogenesis. The sequence is that of GTPase Der from Brucella anthropi (strain ATCC 49188 / DSM 6882 / CCUG 24695 / JCM 21032 / LMG 3331 / NBRC 15819 / NCTC 12168 / Alc 37) (Ochrobactrum anthropi).